Here is a 722-residue protein sequence, read N- to C-terminus: Dynein axonemal intermediate chain 7 (722 aa).

A compositionally biased stretch (basic residues) spans 1–15 (MGPKAKKSGSKKKKV). Residues 1–20 (MGPKAKKSGSKKKKVTKAER) are disordered.

This sequence belongs to the DNAI7 family. In terms of assembly, part of the multisubunit axonemal dynein complex formed at least of two heavy chains and a number of intermediate and light chains. Associates with tubulin. Interacts with microtubule. In terms of processing, ubiquitinated. Ubiquitination leads to its degradation through the 26S proteasome. Ubiquitin-proteasome-mediated DNAI7 degradation occurs in mitosis.

Its subcellular location is the cell projection. The protein localises to the cilium. The protein resides in the cytoplasm. Via its association with the multisubunit axonemal dynein complex, is potentially involved in the regulation of cilia function. May act as a cell cycle regulator. The sequence is that of Dynein axonemal intermediate chain 7 from Macaca fascicularis (Crab-eating macaque).